Consider the following 152-residue polypeptide: Ribonuclease H (152 aa).

The RNase H type-1 domain maps to 4 to 145 (SRSMVEIFSD…CDELARQAIA (142 aa)). Mg(2+)-binding residues include Asp-13, Glu-51, Asp-73, and Asp-137.

This sequence belongs to the RNase H family. In terms of assembly, monomer. Mg(2+) is required as a cofactor.

The protein resides in the cytoplasm. The catalysed reaction is Endonucleolytic cleavage to 5'-phosphomonoester.. In terms of biological role, endonuclease that specifically degrades the RNA of RNA-DNA hybrids. The protein is Ribonuclease H of Syntrophotalea carbinolica (strain DSM 2380 / NBRC 103641 / GraBd1) (Pelobacter carbinolicus).